A 679-amino-acid polypeptide reads, in one-letter code: Protein polyglycylase TTLL10 (679 aa).

The segment covering 1-15 (MPLHPPARRPHGHRR) has biased composition (basic residues). Disordered stretches follow at residues 1–33 (MPLHPPARRPHGHRRNGSEAQTEATTQDTGRLS), 49–77 (GHRAARRPRRGVGTTSASRAPRPGALMPA), and 96–124 (VSFKRPKRSRTHQSHTKVPGWTHEKRMGS). Residues 18 to 30 (SEAQTEATTQDTG) are compositionally biased toward polar residues. Positions 96–110 (VSFKRPKRSRTHQSH) are enriched in basic residues. Residues 172–543 (QGPFFYIGGT…TCQKSLHSQK (372 aa)) form the TTL domain. Residues lysine 304, 310 to 311 (QG), 353 to 356 (QRYV), 366 to 368 (KFD), and 409 to 410 (TN) each bind ATP. Residue glutamine 310 participates in a protein binding. Residues aspartate 489, glutamate 502, and asparagine 504 each coordinate Mg(2+). The tract at residues 605-679 (DRPAARKSMS…EQRSTSHRGS (75 aa)) is disordered.

The cofactor is Mg(2+).

The protein resides in the cytoplasm. It localises to the cytoskeleton. Its subcellular location is the cell projection. It is found in the cilium. The protein localises to the cilium axoneme. The catalysed reaction is (glycyl)(n)-glycyl-L-glutamyl-[protein] + glycine + ATP = (glycyl)(n+1)-glycyl-L-glutamyl-[protein] + ADP + phosphate + H(+). In terms of biological role, polyglycylase which modifies both tubulin and non-tubulin proteins, generating polyglycine side chains of variable lengths on the gamma-carboxyl groups of specific glutamate residues of target proteins. Involved in the elongation step rather than the initiation step of the polyglycylation reaction. Polyglycylates alpha-tubulin and beta-tubulin. Polyglycylates non-tubulin proteins such as nucleosome assembly protein NAP1. The protein is Protein polyglycylase TTLL10 of Rattus norvegicus (Rat).